A 115-amino-acid polypeptide reads, in one-letter code: Macroconotoxin Mu8.1 (115 aa).

The signal sequence occupies residues 1-21; sequence MDMKMTFSGLVLVVLVTTVVG. Residues 22-26 constitute a propeptide that is removed on maturation; that stretch reads SSVRR. Disulfide bonds link C36–C77, C44–C60, C48–C56, C83–C115, and C87–C97. A Zn(2+)-binding site is contributed by E40. Residue H68 coordinates Zn(2+).

Mostly found as a homodimer in solution; non-covalently bound. As to expression, expressed by the venom duct.

It is found in the secreted. Modestly and reversibly inhibits Cav2.3/CACNA1E (IC(50)=5.8 uM) recombinantly expressed in HEK293 cells without affecting the voltage dependence of activation. In mouse DRG sensory neurons, modulates depolarization-induced calcium influx. The chain is Macroconotoxin Mu8.1 from Conus mucronatus (Pointed cone).